A 615-amino-acid polypeptide reads, in one-letter code: TANK-binding kinase 1-binding protein 1 (615 aa).

Positions 1–279 (MESMFEDDIS…QDLASNQSER (279 aa)) are homodimerization. Residues 48-162 (YGDIKERLGG…ALVETHLRQI (115 aa)) are a coiled coil. A Phosphoserine modification is found at S184. Residues 221–276 (VSDLERRRLEEALEAAQGEARGAQLREEQLQAECERLQGELKQLQETRAQDLASNQ) are a coiled coil. The interval 280 to 329 (DMAWVKRVGDDQVNLALAYTELTEELGRLRELSSLQGRILRTLLQEQARS) is interaction with TBK1 and IKBKE. The interval 326–458 (QARSGGQRHS…SHHVKAGFQG (133 aa)) is disordered. Over residues 345-365 (PQCPSPSPPARAAPPCPPCQS) the composition is skewed to pro residues. Phosphoserine occurs at positions 365, 372, 379, 385, 400, and 415. The segment covering 389-406 (PSCPSPVPQRRSPVPPSC) has biased composition (pro residues). Residues 416 to 435 (PVPPSCPAPQPRPPPPPPPG) are compositionally biased toward pro residues. Phosphoserine occurs at positions 504 and 534. The UBZ1-type zinc-finger motif lies at 583-609 (IRSCPLCQLGFPVGYPDDALIKHIDSH). Residues C586, C589, H605, and H609 each contribute to the Zn(2+) site.

As to quaternary structure, homodimer. May form a heterodimer with NAP1. Interacts with TKB1 and IKBKE. Weakly interacts with DDX3X. (Microbial infection) Interacts with vaccinia virus protein C6. As to expression, detected in leukocytes, lung, placenta, small intestine, liver, kidney, spleen, muscle, heart, brain and at low levels in thymus.

Its function is as follows. Adapter protein which constitutively binds TBK1 and IKBKE playing a role in antiviral innate immunity. In Homo sapiens (Human), this protein is TANK-binding kinase 1-binding protein 1.